Reading from the N-terminus, the 562-residue chain is Formate--tetrahydrofolate ligase (562 aa).

Residue 71–78 (TPAGEGKS) participates in ATP binding.

Belongs to the formate--tetrahydrofolate ligase family.

The enzyme catalyses (6S)-5,6,7,8-tetrahydrofolate + formate + ATP = (6R)-10-formyltetrahydrofolate + ADP + phosphate. It functions in the pathway one-carbon metabolism; tetrahydrofolate interconversion. This chain is Formate--tetrahydrofolate ligase, found in Bacillus thuringiensis (strain Al Hakam).